The following is a 265-amino-acid chain: Type III pantothenate kinase (265 aa).

Asp17–Ser24 contacts ATP. Substrate is bound at residue Gly114–Val117. Residue Asp116 is the Proton acceptor of the active site. Asp137 lines the K(+) pocket. Thr140 serves as a coordination point for ATP. Thr192 lines the substrate pocket.

Belongs to the type III pantothenate kinase family. Homodimer. NH4(+) is required as a cofactor. The cofactor is K(+).

Its subcellular location is the cytoplasm. It carries out the reaction (R)-pantothenate + ATP = (R)-4'-phosphopantothenate + ADP + H(+). It participates in cofactor biosynthesis; coenzyme A biosynthesis; CoA from (R)-pantothenate: step 1/5. Catalyzes the phosphorylation of pantothenate (Pan), the first step in CoA biosynthesis. In Borrelia hermsii (strain HS1 / DAH), this protein is Type III pantothenate kinase.